The chain runs to 1483 residues: Rho GTPase-activating protein 23 (1483 aa).

The tract at residues 15 to 34 (PEPRPPQLPLGPRDGCSSGR) is disordered. One can recognise a PDZ domain in the interval 71-155 (HCILKEEENG…TLELSIMPKD (85 aa)). 2 disordered regions span residues 212-276 (ISAL…PGSR) and 300-345 (AGER…GQEG). Basic and acidic residues predominate over residues 316-325 (SQDRLEDVTT). The span at 331 to 342 (CSTSQDALSQLG) shows a compositional bias: polar residues. 2 positions are modified to phosphoserine: Ser361 and Ser372. Positions 385–407 (PSARTSACPSRDLTQAPPPSGLQ) are disordered. The residue at position 421 (Ser421) is a Phosphoserine. 2 disordered regions span residues 448–485 (SLAQ…DHRD) and 508–527 (NLGF…RLGR). Phosphoserine is present on residues Ser515, Ser579, Ser607, and Ser619. Thr652 carries the phosphothreonine modification. Ser655, Ser658, and Ser673 each carry phosphoserine. Residues 684–804 (DIRREGWLYY…WIRAIRENSR (121 aa)) enclose the PH domain. A disordered region spans residues 827 to 848 (KVSHSSGPKADSSPKGSRGLGG). Residue Lys850 forms a Glycyl lysine isopeptide (Lys-Gly) (interchain with G-Cter in SUMO2) linkage. Disordered regions lie at residues 860-879 (RGLR…VAAP), 1093-1150 (FSDD…SWVP), 1171-1361 (KRKK…GSRP), and 1419-1469 (ELGG…LQGL). In terms of domain architecture, Rho-GAP spans 901-1093 (IRLEECQPAT…TLIQHSDWFF (193 aa)). Over residues 1099-1110 (KGERTPVDDKEP) the composition is skewed to basic and acidic residues. Composition is skewed to polar residues over residues 1133 to 1144 (GSDSTTCSSAKS) and 1236 to 1248 (SIVS…STMD). The segment covering 1338–1351 (GSASSSSQESLRPP) has biased composition (low complexity). The segment covering 1440 to 1457 (SGLSSLESTKARASSAAS) has biased composition (polar residues).

In terms of biological role, GTPase activator for the Rho-type GTPases by converting them to an inactive GDP-bound state. This Mus musculus (Mouse) protein is Rho GTPase-activating protein 23 (Arhgap23).